The following is a 180-amino-acid chain: Large ribosomal subunit protein uL5 (180 aa).

The protein belongs to the universal ribosomal protein uL5 family. In terms of assembly, part of the 50S ribosomal subunit; part of the 5S rRNA/L5/L18/L25 subcomplex. Contacts the 5S rRNA and the P site tRNA. Forms a bridge to the 30S subunit in the 70S ribosome.

Its function is as follows. This is one of the proteins that bind and probably mediate the attachment of the 5S RNA into the large ribosomal subunit, where it forms part of the central protuberance. In the 70S ribosome it contacts protein S13 of the 30S subunit (bridge B1b), connecting the 2 subunits; this bridge is implicated in subunit movement. Contacts the P site tRNA; the 5S rRNA and some of its associated proteins might help stabilize positioning of ribosome-bound tRNAs. In Chloroflexus aurantiacus (strain ATCC 29364 / DSM 637 / Y-400-fl), this protein is Large ribosomal subunit protein uL5.